The sequence spans 267 residues: Hydroxyacylglutathione hydrolase (267 aa).

Zn(2+) contacts are provided by His55, His57, Asp59, His60, His121, Asp138, and His176.

Belongs to the metallo-beta-lactamase superfamily. Glyoxalase II family. Monomer. It depends on Zn(2+) as a cofactor.

The catalysed reaction is an S-(2-hydroxyacyl)glutathione + H2O = a 2-hydroxy carboxylate + glutathione + H(+). It participates in secondary metabolite metabolism; methylglyoxal degradation; (R)-lactate from methylglyoxal: step 2/2. Its function is as follows. Thiolesterase that catalyzes the hydrolysis of S-D-lactoyl-glutathione to form glutathione and D-lactic acid. This is Hydroxyacylglutathione hydrolase from Shewanella sp. (strain ANA-3).